Consider the following 753-residue polypeptide: Probable TonB-dependent siderophore receptor PiuA (753 aa).

The N-terminal stretch at 1-35 is a signal peptide; it reads MSRQSTDTAVSSQRLLASAIGVAITAIAAPQAAQA. The region spanning 79–185 is the TBDR plug domain; that stretch reads PLLDTPKTVT…TGGSLNLISK (107 aa). Residues 190–753 enclose the TBDR beta-barrel domain; that stretch reads DNFTDAGFTW…TALLGVNFHF (564 aa). Residues Cys420 and Cys430 are joined by a disulfide bond.

It belongs to the TonB-dependent receptor family.

The protein localises to the cell outer membrane. In terms of biological role, involved in the initial step of iron uptake by binding iron chelating siderophores, thereby allowing extraction of iron from the environment. Probably involved in the transport of siderophores, including host catecholamines such as dopamine. This chain is Probable TonB-dependent siderophore receptor PiuA, found in Pseudomonas aeruginosa (strain ATCC 15692 / DSM 22644 / CIP 104116 / JCM 14847 / LMG 12228 / 1C / PRS 101 / PAO1).